Reading from the N-terminus, the 513-residue chain is Cytochrome P450 1A2 (513 aa).

Ser68 is a glycosylation site (O-linked (GlcNAc) serine). Residue Phe225 participates in substrate binding. Residue Cys456 participates in heme binding.

The protein belongs to the cytochrome P450 family. Interacts with PGRMC1; the interaction requires PGRMC1 homodimerization. The cofactor is heme. In terms of tissue distribution, found in lung and liver.

The protein localises to the endoplasmic reticulum membrane. Its subcellular location is the microsome membrane. The enzyme catalyses an organic molecule + reduced [NADPH--hemoprotein reductase] + O2 = an alcohol + oxidized [NADPH--hemoprotein reductase] + H2O + H(+). It carries out the reaction 17beta-estradiol + reduced [NADPH--hemoprotein reductase] + O2 = 2-hydroxy-17beta-estradiol + oxidized [NADPH--hemoprotein reductase] + H2O + H(+). It catalyses the reaction 17beta-estradiol + reduced [NADPH--hemoprotein reductase] + O2 = 4-hydroxy-17beta-estradiol + oxidized [NADPH--hemoprotein reductase] + H2O + H(+). The catalysed reaction is estrone + reduced [NADPH--hemoprotein reductase] + O2 = 2-hydroxyestrone + oxidized [NADPH--hemoprotein reductase] + H2O + H(+). The enzyme catalyses estrone + reduced [NADPH--hemoprotein reductase] + O2 = 4-hydroxyestrone + oxidized [NADPH--hemoprotein reductase] + H2O + H(+). It carries out the reaction cholesterol + reduced [NADPH--hemoprotein reductase] + O2 = 25-hydroxycholesterol + oxidized [NADPH--hemoprotein reductase] + H2O + H(+). It catalyses the reaction all-trans-retinol + reduced [NADPH--hemoprotein reductase] + O2 = all-trans-retinal + oxidized [NADPH--hemoprotein reductase] + 2 H2O + H(+). The catalysed reaction is all-trans-retinal + reduced [NADPH--hemoprotein reductase] + O2 = all-trans-retinoate + oxidized [NADPH--hemoprotein reductase] + H2O + 2 H(+). The enzyme catalyses (5Z,8Z,11Z,14Z)-eicosatetraenoate + reduced [NADPH--hemoprotein reductase] + O2 = (14R,15S)-epoxy-(5Z,8Z,11Z)-eicosatrienoate + oxidized [NADPH--hemoprotein reductase] + H2O + H(+). It carries out the reaction (5Z,8Z,11Z,14Z)-eicosatetraenoate + reduced [NADPH--hemoprotein reductase] + O2 = (14S,15R)-epoxy-(5Z,8Z,11Z)-eicosatrienoate + oxidized [NADPH--hemoprotein reductase] + H2O + H(+). It catalyses the reaction (5Z,8Z,11Z,14Z,17Z)-eicosapentaenoate + reduced [NADPH--hemoprotein reductase] + O2 = (17R,18S)-epoxy-(5Z,8Z,11Z,14Z)-eicosatetraenoate + oxidized [NADPH--hemoprotein reductase] + H2O + H(+). The catalysed reaction is (4Z,7Z,10Z,13Z,16Z,19Z)-docosahexaenoate + reduced [NADPH--hemoprotein reductase] + O2 = (19R,20S)-epoxy-(4Z,7Z,10Z,13Z,16Z)-docosapentaenoate + oxidized [NADPH--hemoprotein reductase] + H2O + H(+). The enzyme catalyses (5S)-hydroperoxy-(6E,8Z,11Z,14Z)-eicosatetraenoate = 5-oxo-(6E,8Z,11Z,14Z)-eicosatetraenoate + H2O. It carries out the reaction (12S)-hydroperoxy-(5Z,8Z,10E,14Z)-eicosatetraenoate = 12-oxo-(5Z,8Z,10E,14Z)-eicosatetraenoate + H2O. It catalyses the reaction (15S)-hydroperoxy-(5Z,8Z,11Z,13E)-eicosatetraenoate = 15-oxo-(5Z,8Z,11Z,13E)-eicosatetraenoate + H2O. The catalysed reaction is (13S)-hydroperoxy-(9Z,11E)-octadecadienoate = 13-oxo-(9Z,11E)-octadecadienoate + H2O. The enzyme catalyses (5Z,8Z,11Z,14Z)-eicosatetraenoate + reduced [NADPH--hemoprotein reductase] + O2 = 13-hydroxy-(5Z,8Z,11Z,14Z)-eicosatetraenoate + oxidized [NADPH--hemoprotein reductase] + H2O + H(+). It carries out the reaction (5Z,8Z,11Z,14Z)-eicosatetraenoate + reduced [NADPH--hemoprotein reductase] + O2 = 19-hydroxy-(5Z,8Z,11Z,14Z)-eicosatetraenoate + oxidized [NADPH--hemoprotein reductase] + H2O + H(+). It catalyses the reaction (9Z,12Z)-octadecadienoate + reduced [NADPH--hemoprotein reductase] + O2 = 11-hydroxy-(9Z,12Z)-octadecadienoate + oxidized [NADPH--hemoprotein reductase] + H2O + H(+). Its pathway is cofactor metabolism; retinol metabolism. It participates in steroid metabolism; cholesterol metabolism. The protein operates within lipid metabolism; arachidonate metabolism. Its function is as follows. A cytochrome P450 monooxygenase involved in the metabolism of various endogenous substrates, including fatty acids, steroid hormones and vitamins. Mechanistically, uses molecular oxygen inserting one oxygen atom into a substrate, and reducing the second into a water molecule, with two electrons provided by NADPH via cytochrome P450 reductase (NADPH--hemoprotein reductase). Catalyzes the hydroxylation of carbon-hydrogen bonds. Exhibits high catalytic activity for the formation of hydroxyestrogens from estrone (E1) and 17beta-estradiol (E2), namely 2-hydroxy E1 and E2. Metabolizes cholesterol toward 25-hydroxycholesterol, a physiological regulator of cellular cholesterol homeostasis. May act as a major enzyme for all-trans retinoic acid biosynthesis in the liver. Catalyzes two successive oxidative transformation of all-trans retinol to all-trans retinal and then to the active form all-trans retinoic acid. Primarily catalyzes stereoselective epoxidation of the last double bond of polyunsaturated fatty acids (PUFA), displaying a strong preference for the (R,S) stereoisomer. Catalyzes bisallylic hydroxylation and omega-1 hydroxylation of PUFA. May also participate in eicosanoids metabolism by converting hydroperoxide species into oxo metabolites (lipoxygenase-like reaction, NADPH-independent). Plays a role in the oxidative metabolism of xenobiotics. Catalyzes the N-hydroxylation of heterocyclic amines and the O-deethylation of phenacetin. Metabolizes caffeine via N3-demethylation. This is Cytochrome P450 1A2 (CYP1A2) from Mesocricetus auratus (Golden hamster).